The sequence spans 59 residues: MSKVILLCLIFALFACSISALSKNKNCLKLGQKCNFEKKRCCTGLNCYISQNKCLPVKL.

The signal sequence occupies residues 1–19 (MSKVILLCLIFALFACSIS).

This sequence belongs to the limacoditoxin-3 family. Post-translationally, the natural peptide is not amidated. The recombinant peptide is amidated. As to expression, expressed by the venom secretory cell of the spine. The spine is a cuticular structure containing a single large nucleated venom-secreting cell at its base. It is an independent unit capable of producing, storing and injecting venom. On the back of D.vulnerans caterpillars, spines are grouped together by 50 to 100 to form scoli, of which there are eight in D.vulnerans.

Its subcellular location is the secreted. Functionally, probable toxin. Shows a relatively potent antiparasitic activity against the major pathogenic nematode of ruminants (H.contortus, EC(50)=2.6 uM). Does not show insecticidal and antimicrobial activities. Does not induce increase in intracellular calcium in mouse DRG neurons, suggesting that it does not induce pain. In Doratifera vulnerans (Mottled cup moth), this protein is U-limacoditoxin(3)-Dv33.